Consider the following 386-residue polypeptide: Cell division protein FtsZ (386 aa).

GTP-binding positions include 20–24, 107–109, glutamate 138, arginine 142, and asparagine 186; these read GGGGN and GTG. Residues 350–377 are disordered; sequence LNQEQKTAAKAVNEQNAQGSKEPDYLDI.

The protein belongs to the FtsZ family. As to quaternary structure, homodimer. Polymerizes to form a dynamic ring structure in a strictly GTP-dependent manner. Interacts directly with several other division proteins.

It is found in the cytoplasm. Functionally, essential cell division protein that forms a contractile ring structure (Z ring) at the future cell division site. The regulation of the ring assembly controls the timing and the location of cell division. One of the functions of the FtsZ ring is to recruit other cell division proteins to the septum to produce a new cell wall between the dividing cells. Binds GTP and shows GTPase activity. The sequence is that of Cell division protein FtsZ from Sodalis glossinidius.